A 317-amino-acid polypeptide reads, in one-letter code: Pectinesterase 31 (317 aa).

Residues Thr-91 and Gln-121 each coordinate substrate. Residue Asp-144 is the Proton donor of the active site. The active-site Nucleophile is the Asp-165. Residues Arg-222 and Trp-224 each coordinate substrate.

The protein belongs to the pectinesterase family. In terms of tissue distribution, expressed in siliques.

It carries out the reaction [(1-&gt;4)-alpha-D-galacturonosyl methyl ester](n) + n H2O = [(1-&gt;4)-alpha-D-galacturonosyl](n) + n methanol + n H(+). Its pathway is glycan metabolism; pectin degradation; 2-dehydro-3-deoxy-D-gluconate from pectin: step 1/5. With respect to regulation, does not require salt for activity. Not inhibited by kiwi pectin methylesterase inhibitor (PMEI). Functionally, acts in the modification of cell walls via demethylesterification of cell wall pectin. Acts in a blockwise manner, resulting in a cell wall rigidification. The polypeptide is Pectinesterase 31 (PME31) (Arabidopsis thaliana (Mouse-ear cress)).